The primary structure comprises 396 residues: MAKEKFERSKPHVNVGTIGHVDHGKTTLTAAITKVLAQKGGAQFLAYDQIDKAPEERERGITIATAHVEYQTEKRHYAHVDCPGHADYVKNMITGAAQMDGAILVVSAADGPMPQTREHILLARQVGVPYIVVFLNKVDMVDDKELLDLVELEVRELLSEYDFPGNEIPIVKGSALKALEGDKGELGEQAIFKLMEAVDAYIPTPQRATDKPFLMPVEDVFSISGRGTVATGRVERGIVKVGEEVEVVGLKATAKTVVTGVEMFRKLLDEGRAGDNIGALLRGLKREEVERGQVLAKPGSITPHTKFKAEVYVLTKEEGGRHTPFFNGYRPQFYFRTTDVTGSVQLPQGVEMVMPGDNIGMEVELITPIAMEKELRFAIREGGRTVGAGVVAEVIQ.

Residues 10 to 206 enclose the tr-type G domain; the sequence is KPHVNVGTIG…AVDAYIPTPQ (197 aa). Positions 19–26 are G1; it reads GHVDHGKT. Residue 19 to 26 participates in GTP binding; the sequence is GHVDHGKT. Mg(2+) is bound at residue Thr-26. The segment at 60–64 is G2; that stretch reads GITIA. The interval 81 to 84 is G3; that stretch reads DCPG. Residues 81–85 and 136–139 each bind GTP; these read DCPGH and NKVD. The segment at 136 to 139 is G4; it reads NKVD. The interval 174–176 is G5; the sequence is SAL.

The protein belongs to the TRAFAC class translation factor GTPase superfamily. Classic translation factor GTPase family. EF-Tu/EF-1A subfamily. In terms of assembly, monomer.

It localises to the cytoplasm. The catalysed reaction is GTP + H2O = GDP + phosphate + H(+). In terms of biological role, GTP hydrolase that promotes the GTP-dependent binding of aminoacyl-tRNA to the A-site of ribosomes during protein biosynthesis. The chain is Elongation factor Tu from Anaeromyxobacter dehalogenans (strain 2CP-C).